We begin with the raw amino-acid sequence, 261 residues long: Sepiapterin reductase (261 aa).

Position 1 is an N-acetylmethionine (M1). 14–20 is a binding site for NADP(+); it reads GASRGFG. A Phosphoserine modification is found at S32. Residues 42 to 43 and 69 to 70 each bind NADP(+); these read RN and DL. Position 103 is a phosphoserine (S103). Substrate-binding positions include 157–158 and Y170; that span reads SL. Residue K174 participates in NADP(+) binding. G199 serves as a coordination point for substrate. NADP(+) is bound at residue 201–206; sequence LDTDMQ. S213 carries the post-translational modification Phosphoserine; by CaMK2; in vitro. D257 contacts substrate.

The protein belongs to the sepiapterin reductase family. Homodimer. In vitro phosphorylation of Ser-213 by CaMK2 does not change kinetic parameters.

The protein localises to the cytoplasm. The catalysed reaction is L-erythro-7,8-dihydrobiopterin + NADP(+) = L-sepiapterin + NADPH + H(+). The enzyme catalyses (6R)-L-erythro-5,6,7,8-tetrahydrobiopterin + 2 NADP(+) = 6-pyruvoyl-5,6,7,8-tetrahydropterin + 2 NADPH + 2 H(+). Catalyzes the final one or two reductions in tetra-hydrobiopterin biosynthesis to form 5,6,7,8-tetrahydrobiopterin. In Homo sapiens (Human), this protein is Sepiapterin reductase (SPR).